The chain runs to 206 residues: dCTP deaminase, dUMP-forming (206 aa).

Residues 117 to 122 (RSSFGR), Asp-135, 143 to 145 (TLE), Gln-163, Tyr-177, Lys-184, and Gln-188 contribute to the dCTP site. The active-site Proton donor/acceptor is Glu-145.

Belongs to the dCTP deaminase family. As to quaternary structure, homotrimer.

The catalysed reaction is dCTP + 2 H2O = dUMP + NH4(+) + diphosphate. The protein operates within pyrimidine metabolism; dUMP biosynthesis; dUMP from dCTP: step 1/1. In terms of biological role, bifunctional enzyme that catalyzes both the deamination of dCTP to dUTP and the hydrolysis of dUTP to dUMP without releasing the toxic dUTP intermediate. The protein is dCTP deaminase, dUMP-forming of Methanococcus maripaludis (strain C7 / ATCC BAA-1331).